The primary structure comprises 132 residues: Small ribosomal subunit protein uS9 (132 aa).

It belongs to the universal ribosomal protein uS9 family.

This Baumannia cicadellinicola subsp. Homalodisca coagulata protein is Small ribosomal subunit protein uS9.